Here is a 619-residue protein sequence, read N- to C-terminus: Probable Xaa-Pro aminopeptidase P (619 aa).

Mn(2+) contacts are provided by D415, D426, E524, and E538.

This sequence belongs to the peptidase M24B family. Mn(2+) is required as a cofactor.

The catalysed reaction is Release of any N-terminal amino acid, including proline, that is linked to proline, even from a dipeptide or tripeptide.. Catalyzes the removal of a penultimate prolyl residue from the N-termini of peptides. The protein is Probable Xaa-Pro aminopeptidase P (AMPP) of Fusarium vanettenii (strain ATCC MYA-4622 / CBS 123669 / FGSC 9596 / NRRL 45880 / 77-13-4) (Fusarium solani subsp. pisi).